A 159-amino-acid chain; its full sequence is 2-C-methyl-D-erythritol 2,4-cyclodiphosphate synthase (159 aa).

A divalent metal cation-binding residues include aspartate 11 and histidine 13. 4-CDP-2-C-methyl-D-erythritol 2-phosphate is bound by residues aspartate 11–histidine 13 and histidine 37–serine 38. Position 45 (histidine 45) interacts with a divalent metal cation. 4-CDP-2-C-methyl-D-erythritol 2-phosphate contacts are provided by residues aspartate 59–glycine 61 and phenylalanine 64–aspartate 68.

The protein belongs to the IspF family. As to quaternary structure, homotrimer. The cofactor is a divalent metal cation.

It carries out the reaction 4-CDP-2-C-methyl-D-erythritol 2-phosphate = 2-C-methyl-D-erythritol 2,4-cyclic diphosphate + CMP. Its pathway is isoprenoid biosynthesis; isopentenyl diphosphate biosynthesis via DXP pathway; isopentenyl diphosphate from 1-deoxy-D-xylulose 5-phosphate: step 4/6. Its function is as follows. Involved in the biosynthesis of isopentenyl diphosphate (IPP) and dimethylallyl diphosphate (DMAPP), two major building blocks of isoprenoid compounds. Catalyzes the conversion of 4-diphosphocytidyl-2-C-methyl-D-erythritol 2-phosphate (CDP-ME2P) to 2-C-methyl-D-erythritol 2,4-cyclodiphosphate (ME-CPP) with a corresponding release of cytidine 5-monophosphate (CMP). This chain is 2-C-methyl-D-erythritol 2,4-cyclodiphosphate synthase, found in Solibacter usitatus (strain Ellin6076).